A 461-amino-acid polypeptide reads, in one-letter code: Bifunctional protein HldE (461 aa).

Positions 1–312 are ribokinase; it reads MLEFLSQQKP…IKSFNRVDFE (312 aa). 191 to 194 lines the ATP pocket; the sequence is NKKE. Asp-259 is an active-site residue. The interval 334–461 is cytidylyltransferase; sequence FTNGCFDIVH…KIIEKIKDKK (128 aa).

The protein in the N-terminal section; belongs to the carbohydrate kinase PfkB family. This sequence in the C-terminal section; belongs to the cytidylyltransferase family. As to quaternary structure, homodimer.

The catalysed reaction is D-glycero-beta-D-manno-heptose 7-phosphate + ATP = D-glycero-beta-D-manno-heptose 1,7-bisphosphate + ADP + H(+). It carries out the reaction D-glycero-beta-D-manno-heptose 1-phosphate + ATP + H(+) = ADP-D-glycero-beta-D-manno-heptose + diphosphate. It functions in the pathway nucleotide-sugar biosynthesis; ADP-L-glycero-beta-D-manno-heptose biosynthesis; ADP-L-glycero-beta-D-manno-heptose from D-glycero-beta-D-manno-heptose 7-phosphate: step 1/4. The protein operates within nucleotide-sugar biosynthesis; ADP-L-glycero-beta-D-manno-heptose biosynthesis; ADP-L-glycero-beta-D-manno-heptose from D-glycero-beta-D-manno-heptose 7-phosphate: step 3/4. Its function is as follows. Catalyzes the phosphorylation of D-glycero-D-manno-heptose 7-phosphate at the C-1 position to selectively form D-glycero-beta-D-manno-heptose-1,7-bisphosphate. Functionally, catalyzes the ADP transfer from ATP to D-glycero-beta-D-manno-heptose 1-phosphate, yielding ADP-D-glycero-beta-D-manno-heptose. The protein is Bifunctional protein HldE of Campylobacter jejuni subsp. jejuni serotype O:6 (strain 81116 / NCTC 11828).